Consider the following 226-residue polypeptide: Transmembrane protein 204 (226 aa).

At 1 to 5 (MTVQK) the chain is on the cytoplasmic side. The chain crosses the membrane as a helical span at residues 6-26 (LVATAVLVALVSLILNNAAAF). Residues 27–103 (TPNWVYQTLE…LQFDMMRACN (77 aa)) are Extracellular-facing. The chain crosses the membrane as a helical span at residues 104–124 (LVATAALAVGQITFILGLTGL). Over 125 to 136 (PLMSPESQCWEE) the chain is Cytoplasmic. A helical membrane pass occupies residues 137-157 (AMAAAFQLASFVLVIGLVTFY). Residues 158–170 (RIGPYTNLSWSCY) are Extracellular-facing. N-linked (GlcNAc...) asparagine glycosylation occurs at N164. Residues 171–191 (LNIGACLLATLAAAMLIWNIL) form a helical membrane-spanning segment. The Cytoplasmic portion of the chain corresponds to 192 to 226 (HRREDCMAPRVIVISRSLTARFRRGLDNDYVESPC).

The protein localises to the cell junction. It is found in the adherens junction. Its subcellular location is the cell membrane. Can influence paracellular permeability. Appears to be involved in cell-cell interactions through adherens. This chain is Transmembrane protein 204 (Tmem204), found in Rattus norvegicus (Rat).